We begin with the raw amino-acid sequence, 385 residues long: 4-hydroxy-3-methylbut-2-en-1-yl diphosphate synthase (flavodoxin) 2 (385 aa).

[4Fe-4S] cluster-binding residues include Cys-280, Cys-283, Cys-315, and Glu-322.

The protein belongs to the IspG family. The cofactor is [4Fe-4S] cluster.

It carries out the reaction (2E)-4-hydroxy-3-methylbut-2-enyl diphosphate + oxidized [flavodoxin] + H2O + 2 H(+) = 2-C-methyl-D-erythritol 2,4-cyclic diphosphate + reduced [flavodoxin]. Its pathway is isoprenoid biosynthesis; isopentenyl diphosphate biosynthesis via DXP pathway; isopentenyl diphosphate from 1-deoxy-D-xylulose 5-phosphate: step 5/6. Converts 2C-methyl-D-erythritol 2,4-cyclodiphosphate (ME-2,4cPP) into 1-hydroxy-2-methyl-2-(E)-butenyl 4-diphosphate. This is 4-hydroxy-3-methylbut-2-en-1-yl diphosphate synthase (flavodoxin) 2 from Streptomyces coelicolor (strain ATCC BAA-471 / A3(2) / M145).